The sequence spans 298 residues: Elongation factor Ts (298 aa).

An involved in Mg(2+) ion dislocation from EF-Tu region spans residues threonine 79–valine 82.

Belongs to the EF-Ts family.

The protein resides in the cytoplasm. Functionally, associates with the EF-Tu.GDP complex and induces the exchange of GDP to GTP. It remains bound to the aminoacyl-tRNA.EF-Tu.GTP complex up to the GTP hydrolysis stage on the ribosome. The protein is Elongation factor Ts (tsf) of Mycoplasma pneumoniae (strain ATCC 29342 / M129 / Subtype 1) (Mycoplasmoides pneumoniae).